Here is a 338-residue protein sequence, read N- to C-terminus: Lipoate-protein ligase A (338 aa).

In terms of domain architecture, BPL/LPL catalytic spans 29 to 216 (PATQRVLFLW…AFFAHYGERV (188 aa)). Residues R71, 76-79 (GAVF), and K134 contribute to the ATP site. K134 contacts (R)-lipoate.

It belongs to the LplA family. As to quaternary structure, monomer.

Its subcellular location is the cytoplasm. The catalysed reaction is L-lysyl-[lipoyl-carrier protein] + (R)-lipoate + ATP = N(6)-[(R)-lipoyl]-L-lysyl-[lipoyl-carrier protein] + AMP + diphosphate + H(+). It participates in protein modification; protein lipoylation via exogenous pathway; protein N(6)-(lipoyl)lysine from lipoate: step 1/2. It functions in the pathway protein modification; protein lipoylation via exogenous pathway; protein N(6)-(lipoyl)lysine from lipoate: step 2/2. Functionally, catalyzes both the ATP-dependent activation of exogenously supplied lipoate to lipoyl-AMP and the transfer of the activated lipoyl onto the lipoyl domains of lipoate-dependent enzymes. The polypeptide is Lipoate-protein ligase A (Escherichia coli O139:H28 (strain E24377A / ETEC)).